A 186-amino-acid chain; its full sequence is MELEAVLKERTAAAGDPGRVLGAWVRRGWATAGPGVLESDGGSGGTLAFESTSSSRILELTSDNDPEYEALPEGSNVTAHMLAGAVAGVMEHCLMYPVDCVKTRMQSLQPDPAARYRNVMDALSKIVRTEGFWRPLRGLNVTATGAGPAHALYFACYEKLKKTLSDIIHPGGNCHVANGIDNSCPA.

The stretch at Ser75–Thr163 is one Solcar repeat. The next 3 membrane-spanning stretches (helical) occupy residues Val77 to Tyr96, Arg137 to Tyr157, and Gly172 to Pro185.

This sequence belongs to the mitochondrial carrier (TC 2.A.29) family.

The protein resides in the mitochondrion inner membrane. The enzyme catalyses Fe(2+)(in) = Fe(2+)(out). Functionally, mitochondrial iron transporter that mediates iron uptake. Probably required for heme synthesis of hemoproteins and Fe-S cluster assembly in non-erythroid cells. The chain is Mitoferrin-2B (slc25a28-b) from Xenopus laevis (African clawed frog).